The chain runs to 308 residues: Glycine--tRNA ligase alpha subunit (308 aa).

This sequence belongs to the class-II aminoacyl-tRNA synthetase family. In terms of assembly, tetramer of two alpha and two beta subunits.

Its subcellular location is the cytoplasm. It catalyses the reaction tRNA(Gly) + glycine + ATP = glycyl-tRNA(Gly) + AMP + diphosphate. This Brucella abortus (strain 2308) protein is Glycine--tRNA ligase alpha subunit.